Reading from the N-terminus, the 372-residue chain is 3-galactosyl-N-acetylglucosaminide 4-alpha-L-fucosyltransferase FUT3 (372 aa).

The Cytoplasmic portion of the chain corresponds to 1-15 (MDPLGAAKTQWPWRR). The chain crosses the membrane as a helical; Signal-anchor for type II membrane protein span at residues 16–34 (CLAALLFQLLVAVCFFSYL). The Lumenal segment spans residues 35–372 (RVSRDDATGS…MVRSIAAWFT (338 aa)). The disordered stretch occupies residues 40–68 (DATGSPRPGLMAVEPVTGAPGGSSRQDTT). N-linked (GlcNAc...) asparagine glycans are attached at residues N165 and N196.

This sequence belongs to the glycosyltransferase 10 family. In terms of processing, glycosylated.

It localises to the golgi apparatus. The protein resides in the golgi stack membrane. It catalyses the reaction a beta-D-galactosyl-(1-&gt;3)-N-acetyl-beta-D-glucosaminyl derivative + GDP-beta-L-fucose = a beta-D-galactosyl-(1-&gt;3)-[alpha-L-fucosyl-(1-&gt;4)]-N-acetyl-beta-D-glucosaminyl derivative + GDP + H(+). It carries out the reaction an N-acetyl-alpha-neuraminyl-(2-&gt;3)-beta-D-galactosyl-(1-&gt;4)-N-acetyl-beta-D-glucosaminyl derivative + GDP-beta-L-fucose = an alpha-Neu5Ac-(2-&gt;3)-beta-D-Gal-(1-&gt;4)-[alpha-L-Fuc-(1-&gt;3)]-beta-D-GlcNAc derivative + GDP + H(+). The enzyme catalyses a beta-D-galactosyl-(1-&gt;4)-N-acetyl-beta-D-glucosaminyl derivative + GDP-beta-L-fucose = a beta-D-galactosyl-(1-&gt;4)-[alpha-L-fucosyl-(1-&gt;3)]-N-acetyl-beta-D-glucosaminyl derivative + GDP + H(+). The catalysed reaction is an alpha-Neu5Ac-(2-&gt;3)-beta-D-Gal-(1-&gt;4)-beta-D-GlcNAc-(1-&gt;3)-beta-D-Gal-(1-&gt;4)-[alpha-L-Fuc-(1-&gt;3)]-beta-D-GlcNAc derivative + GDP-beta-L-fucose = an alpha-Neu5Ac-(2-&gt;3)-beta-D-Gal-(1-&gt;4)-[alpha-L-Fuc-(1-&gt;3)]-beta-D-GlcNAc-(1-&gt;3)-beta-D-Gal-(1-&gt;4)-[alpha-L-Fuc-(1-&gt;3)]-beta-D-GlcNAc derivative + GDP + H(+). It catalyses the reaction Lc4Cer + GDP-beta-L-fucose = a lactoside III(4)-a-Fuc-Lc4Cer + GDP + H(+). It carries out the reaction a beta-D-Gal-(1-&gt;3)-beta-D-GlcNAc-(1-&gt;3)-beta-D-Gal-(1-&gt;4)-beta-D-Glc-(1&lt;-&gt;1')-Cer(d18:1(4E)) + GDP-beta-L-fucose = a III(4)-a-Fuc-Lc4Cer(d18:1(4E)) + GDP + H(+). The enzyme catalyses N-acetyl-alpha-neuraminosyl-(2-&gt;3)-beta-D-galactosyl-(1-&gt;3)-[N-acetyl-alpha-neuraminosyl-(2-&gt;6)]-N-acetyl-beta-D-glucosaminyl-(1-&gt;3)-beta-D-galactosyl-(1-&gt;4)-beta-D-glucosyl-(1&lt;-&gt;1')-N-acyl-sphing-4-enine + GDP-beta-L-fucose = N-acetyl-alpha-neuraminosyl-(2-&gt;3)-beta-D-galactosyl-(1-&gt;3)-alpha-L-fucosyl-(1-&gt;4)-[N-acetyl-alpha-neuraminosyl-(2-&gt;6)-N-acetyl-beta-D-glucosaminyl-(1-&gt;3)]-beta-D-galactosyl-(1-&gt;4)-beta-D-glucosyl-(1&lt;-&gt;1')-N-acyl-sphing-4-enine + GDP + H(+). The catalysed reaction is N-acetyl-alpha-neuraminosyl-(2-&gt;3)-beta-D-galactosyl-(1-&gt;3)-N-acetyl-beta-D-glucosaminyl-(1-&gt;3)-beta-D-galactosyl-(1-&gt;4)-beta-D-glucosyl-(1&lt;-&gt;1')-N-acyl-sphing-4-enine + GDP-beta-L-fucose = N-acetyl-alpha-neuraminosyl-(2-&gt;3)-beta-D-galactosyl-(1-&gt;3)-alpha-L-fucosyl-(1-&gt;4)-[N-acetyl-beta-D-glucosaminyl-(1-&gt;3)]-beta-D-galactosyl-(1-&gt;4)-beta-D-glucosyl-(1&lt;-&gt;1')-N-acyl-sphing-4-enine + GDP + H(+). It catalyses the reaction beta-D-galactosyl-(1-&gt;3)-N-acetyl-D-glucosamine + GDP-beta-L-fucose = beta-D-galactosyl-(1-&gt;3)-[alpha-L-fucosyl-(1-&gt;4)]-N-acetyl-D-glucosamine + GDP + H(+). It carries out the reaction alpha-L-Fuc-(1-&gt;2)-beta-D-Gal-(1-&gt;3)-D-GlcNAc + GDP-beta-L-fucose = alpha-L-Fuc-(1-&gt;2)-beta-D-Gal-(1-&gt;3)-[alpha-L-Fuc-(1-&gt;4)]-D-GlcNAc + GDP + H(+). The enzyme catalyses alpha-L-Fuc-(1-&gt;2)-beta-D-Gal-(1-&gt;4)-D-GlcNAc + GDP-beta-L-fucose = alpha-L-Fuc-(1-&gt;2)-beta-D-Gal-(1-&gt;4)-[alpha-L-Fuc-(1-&gt;3)]-D-GlcNAc + GDP + H(+). The catalysed reaction is beta-D-galactosyl-(1-&gt;4)-N-acetyl-D-glucosamine + GDP-beta-L-fucose = beta-D-galactosyl-(1-&gt;4)-[alpha-L-fucosyl-(1-&gt;3)]-N-acetyl-D-glucosamine + GDP + H(+). It catalyses the reaction lactose + GDP-beta-L-fucose = beta-D-galactosyl-(1-&gt;4)-[alpha-L-fucosyl-(1-&gt;3)]-D-glucose + GDP + H(+). It carries out the reaction an alpha-Neu5Ac-(2-&gt;3)-beta-D-Gal-(1-&gt;3)-D-GlcNAc derivative + GDP-beta-L-fucose = an alpha-Neu5Ac-(2-&gt;3)-beta-D-Gal-(1-&gt;3)-[alpha-L-Fuc-(1-&gt;4)]-beta-D-GlcNAc derivative + GDP + H(+). It participates in protein modification; protein glycosylation. Functionally, catalyzes the transfer of L-fucose, from a guanosine diphosphate-beta-L-fucose, to both the subterminal N-acetyl glucosamine (GlcNAc) of type 1 chain (beta-D-Gal-(1-&gt;3)-beta-D-GlcNAc) glycolipids and oligosaccharides via an alpha(1,4) linkage, and the subterminal glucose (Glc) or GlcNAc of type 2 chain (beta-D-Gal-(1-&gt;4)-beta-D-GlcNAc) oligosaccharides via an alpha(1,3) linkage, independently of the presence of terminal alpha-L-fucosyl-(1,2) moieties on the terminal galactose of these acceptors and participates in the blood groups Lewis determination and expression of Lewis a (Le(a)), lewis b (Le(b)), Lewis x/SSEA-1 (Le(x)) and lewis y (Le(y)) antigens. Also catalyzes the transfer of L-fucose to subterminal GlcNAc of sialyl- and disialyl-lactotetraosylceramide to produce sialyl Lewis a (sLe(a)) and disialyl Lewis a via an alpha(1,4) linkage and therefore may regulate cell surface sialyl Lewis a expression and consequently regulates adhesive properties to E-selectin, cell proliferation and migration. Catalyzes the transfer of an L-fucose to 3'-sialyl-N-acetyllactosamine by an alpha(1,3) linkage, which allows the formation of sialyl-Lewis x structure and therefore may regulate the sialyl-Lewis x surface antigen expression and consequently adhesive properties to E-selectin. Prefers type 1 chain over type 2 acceptors. Type 1 tetrasaccharide is a better acceptor than type 1 disaccharide suggesting that a beta anomeric configuration of GlcNAc in the substrate is preferred. Lewis-positive (Le(+)) individuals have an active enzyme while Lewis-negative (Le(-)) individuals have an inactive enzyme. In Pongo pygmaeus (Bornean orangutan), this protein is 3-galactosyl-N-acetylglucosaminide 4-alpha-L-fucosyltransferase FUT3.